Here is a 510-residue protein sequence, read N- to C-terminus: Allene oxide synthase 2, chloroplastic (510 aa).

Residues 1–31 (MALTLSFSLPLPSLHQKIPSKYSTFRPIIVS) constitute a chloroplast transit peptide. Heme b is bound by residues K127, H158, and K162. (13S)-hydroperoxy-(9Z,11E)-octadecadienoate is bound by residues N315 and K321. Position 315 (N315) interacts with (13S)-hydroperoxy-(9Z,11E,15Z)-octadecatrienoate. 2 residues coordinate heme b: K463 and C465.

The protein belongs to the cytochrome P450 family. Heme b is required as a cofactor. In terms of tissue distribution, expressed in flower buds, leaves, roots, stems, petioles and cotyledons. Not detected in ripe fruits. Expressed in sieve elements.

The protein resides in the plastid. It localises to the chloroplast inner membrane. The enzyme catalyses (13S)-hydroperoxy-(9Z,11E,15Z)-octadecatrienoate = (9Z,13S,15Z)-12,13-epoxyoctadeca-9,11,15-trienoate + H2O. The catalysed reaction is (13S)-hydroperoxy-(9Z,11E)-octadecadienoate = (9Z,13S)-12,13-epoxyoctadeca-9,11-dienoate + H2O. Functionally, cytochrome P450 of the CYP74A subfamily involved in the biosynthesis of jasmonic acid from lipoxygenase-derived hydroperoxides of free fatty acids. Catalyzes the synthesis of unstable allene oxide, which is further converted spontaneously by hydrolysis or cyclization. Metabolizes 13- but not 9-hydroperoxides of linoleic and linolenic acids. Can use 15S-hydroperoxy-11(Z),13(E),17(Z)-eicosatrienoic acid (15-HPET) and 13S-hydroperoxy-9(Z),11(E),15(Z)-octadecatrienoic acid (13-HPOT) as substrates, but only 50% activity with 13S-hydroperoxy-9(Z),11(E)-octadecadienoic acid (13-HPOD). The sequence is that of Allene oxide synthase 2, chloroplastic from Solanum lycopersicum (Tomato).